A 362-amino-acid chain; its full sequence is Ferrochelatase (362 aa).

Fe cation-binding residues include H228 and E309.

This sequence belongs to the ferrochelatase family.

The protein resides in the cytoplasm. It catalyses the reaction heme b + 2 H(+) = protoporphyrin IX + Fe(2+). Its pathway is porphyrin-containing compound metabolism; protoheme biosynthesis; protoheme from protoporphyrin-IX: step 1/1. Functionally, catalyzes the ferrous insertion into protoporphyrin IX. The protein is Ferrochelatase of Bordetella parapertussis (strain 12822 / ATCC BAA-587 / NCTC 13253).